Consider the following 477-residue polypeptide: Probable cytosolic Fe-S cluster assembly factor CG17683 (477 aa).

Residues Cys23, Cys68, Cys71, Cys74, Cys187, Cys243, Cys395, and Cys399 each coordinate [4Fe-4S] cluster.

The protein belongs to the NARF family.

In terms of biological role, component of the cytosolic iron-sulfur (Fe/S) protein assembly machinery. Required for maturation of extramitochondrial Fe/S proteins. In Drosophila melanogaster (Fruit fly), this protein is Probable cytosolic Fe-S cluster assembly factor CG17683.